Consider the following 340-residue polypeptide: Myomesin-1 (340 aa).

A disordered region spans residues 177–212 (AEKARLKSRPSAPXTGQIIVTEEEPSEEAGTENXQR). Residues 197 to 206 (TEEEPSEEAG) are compositionally biased toward acidic residues.

As to quaternary structure, homodimer. Interacts with TTN/titin and PNKD. In terms of tissue distribution, seems to be expressed in all cardiac and skeletal fibers.

The protein resides in the cytoplasm. The protein localises to the myofibril. It is found in the sarcomere. Its subcellular location is the m line. Major component of the vertebrate myofibrillar M band. Binds myosin, titin, and light meromyosin. This binding is dose dependent. The chain is Myomesin-1 (MYOM1) from Bos taurus (Bovine).